Consider the following 301-residue polypeptide: Glycine--tRNA ligase alpha subunit (301 aa).

The protein belongs to the class-II aminoacyl-tRNA synthetase family. As to quaternary structure, tetramer of two alpha and two beta subunits.

Its subcellular location is the cytoplasm. It catalyses the reaction tRNA(Gly) + glycine + ATP = glycyl-tRNA(Gly) + AMP + diphosphate. This is Glycine--tRNA ligase alpha subunit from Bordetella avium (strain 197N).